The primary structure comprises 297 residues: N-acetylmuramic acid 6-phosphate etherase (297 aa).

The region spanning 55 to 218 (AVAALKSGGR…STGAMVKFGK (164 aa)) is the SIS domain. Residue Glu83 is the Proton donor of the active site. Residue Glu114 is part of the active site.

The protein belongs to the GCKR-like family. MurNAc-6-P etherase subfamily. Homodimer.

It carries out the reaction N-acetyl-D-muramate 6-phosphate + H2O = N-acetyl-D-glucosamine 6-phosphate + (R)-lactate. The protein operates within amino-sugar metabolism; 1,6-anhydro-N-acetylmuramate degradation. It participates in amino-sugar metabolism; N-acetylmuramate degradation. Its pathway is cell wall biogenesis; peptidoglycan recycling. Its function is as follows. Specifically catalyzes the cleavage of the D-lactyl ether substituent of MurNAc 6-phosphate, producing GlcNAc 6-phosphate and D-lactate. Together with AnmK, is also required for the utilization of anhydro-N-acetylmuramic acid (anhMurNAc) either imported from the medium or derived from its own cell wall murein, and thus plays a role in cell wall recycling. The chain is N-acetylmuramic acid 6-phosphate etherase from Salmonella dublin (strain CT_02021853).